A 320-amino-acid polypeptide reads, in one-letter code: Eukaryotic translation initiation factor 3 subunit G (320 aa).

Positions 1–59 (MPTGDFDSKPSWADQVEEEGEDDKCVTSELLKGIPLATGDTSPEPELLPGAPLPPPKEV) are disordered. Ser8 and Ser11 each carry phosphoserine. Residues Thr38 and Thr41 each carry the phosphothreonine modification. Phosphoserine is present on residues Ser42, Ser189, Ser223, and Ser264. The interval 209–234 (KTGKYVPPSLRDGASRRGESMQPNRR) is disordered. The span at 221–234 (GASRRGESMQPNRR) shows a compositional bias: basic and acidic residues. The region spanning 239–317 (ATIRVTNLSE…LILNVEWAKP (79 aa)) is the RRM domain.

Component of the eukaryotic translation initiation factor 3 (eIF-3) complex, which is composed of 13 subunits: EIF3A, EIF3B, EIF3C, EIF3D, EIF3E, EIF3F, EIF3G, EIF3H, EIF3I, EIF3J, EIF3K, EIF3L and EIF3M. The eIF-3 complex appears to include 3 stable modules: module A is composed of EIF3A, EIF3B, EIF3G and EIF3I; module B is composed of EIF3F, EIF3H, and EIF3M; and module C is composed of EIF3C, EIF3D, EIF3E, EIF3K and EIF3L. EIF3C of module C binds EIF3B of module A and EIF3H of module B, thereby linking the three modules. EIF3J is a labile subunit that binds to the eIF-3 complex via EIF3B. The eIF-3 complex interacts with RPS6KB1 under conditions of nutrient depletion. Mitogenic stimulation leads to binding and activation of a complex composed of MTOR and RPTOR, leading to phosphorylation and release of RPS6KB1 and binding of EIF4B to eIF-3. Interacts (via C-terminus) with AIFM1 (via N-terminus). Interacts with DHX33; the interaction is independent of RNA. In terms of processing, phosphorylated. Phosphorylation is enhanced upon serum stimulation.

It is found in the cytoplasm. It localises to the nucleus. The protein localises to the perinuclear region. Functionally, RNA-binding component of the eukaryotic translation initiation factor 3 (eIF-3) complex, which is required for several steps in the initiation of protein synthesis. The eIF-3 complex associates with the 40S ribosome and facilitates the recruitment of eIF-1, eIF-1A, eIF-2:GTP:methionyl-tRNAi and eIF-5 to form the 43S pre-initiation complex (43S PIC). The eIF-3 complex stimulates mRNA recruitment to the 43S PIC and scanning of the mRNA for AUG recognition. The eIF-3 complex is also required for disassembly and recycling of post-termination ribosomal complexes and subsequently prevents premature joining of the 40S and 60S ribosomal subunits prior to initiation. The eIF-3 complex specifically targets and initiates translation of a subset of mRNAs involved in cell proliferation, including cell cycling, differentiation and apoptosis, and uses different modes of RNA stem-loop binding to exert either translational activation or repression. This subunit can bind 18S rRNA. (Microbial infection) In case of FCV infection, plays a role in the ribosomal termination-reinitiation event leading to the translation of VP2. The protein is Eukaryotic translation initiation factor 3 subunit G of Homo sapiens (Human).